The chain runs to 273 residues: Alkaline ceramidase 1 (273 aa).

The Lumenal portion of the chain corresponds to 1 to 36; sequence MHVPGTRAKMSSIFAYQSSEVDWCESNFQHSELVAE. Residues aspartate 22, tryptophan 23, glutamate 25, asparagine 27, and glutamate 36 each contribute to the Ca(2+) site. Residues 37–57 traverse the membrane as a helical segment; sequence FYNTFSNVFFLIFGPLMMFLM. Topologically, residues 58-72 are cytoplasmic; the sequence is HPYAQKRTRCFYGVS. 2 consecutive transmembrane segments (helical) span residues 73-93 and 94-114; these read VLFMLIGLFSMYFHMTLSFLG and QLLDEISILWLLASGYSVWLP. Histidine 86 contributes to the Zn(2+) binding site. The Cytoplasmic segment spans residues 115-126; sequence RCYFPKFVKGNR. The helical transmembrane segment at 127–147 threads the bilayer; sequence FYFSCLVTITTIISTFLTFVK. Residues 148–149 lie on the Lumenal side of the membrane; it reads PT. Residues 150–167 traverse the membrane as a helical segment; that stretch reads VNAYALNSIAIHILYIVR. At 168-177 the chain is on the cytoplasmic side; that stretch reads TEYKKIRDDD. Residues 178–198 traverse the membrane as a helical segment; sequence LRHLIAVSVVLWAAALTSWIS. At 199–215 the chain is on the lumenal side; sequence DRVLCSFWQRIHFYYLH. Residues histidine 215 and histidine 219 each contribute to the Zn(2+) site. Residues 216–236 form a helical membrane-spanning segment; the sequence is SIWHVLISITFPYGIVTMALV. Residues 237–273 are Cytoplasmic-facing; that stretch reads DAKYEMPDKTLKVHYWPRDSWVIGLPYVEIQENDKNC.

It belongs to the alkaline ceramidase family. Zn(2+) serves as cofactor. As to expression, highly expressed in skin. Weakly or not expressed in other tissues. Expressed by granular layer of interfollicular epidermis, sebaceous glands and infundibulum.

The protein resides in the endoplasmic reticulum membrane. The enzyme catalyses an N-acylsphing-4-enine + H2O = sphing-4-enine + a fatty acid. The catalysed reaction is N-tetracosanoyl-sphing-4-enine + H2O = tetracosanoate + sphing-4-enine. It carries out the reaction an N-acylsphinganine + H2O = sphinganine + a fatty acid. It catalyses the reaction N-(9Z-octadecenoyl)-sphing-4-enine + H2O = sphing-4-enine + (9Z)-octadecenoate. The enzyme catalyses N-(15Z-tetracosenoyl)-sphing-4-enine + H2O = (15Z)-tetracosenoate + sphing-4-enine. Its pathway is lipid metabolism; sphingolipid metabolism. Its activity is regulated as follows. Inhibited by sphingosine. Inhibited by Mn(2+), Zn(2+), and Cu(2+) in a dose-dependent manner. Slightly activated by Ca(2+) in a dose-dependent manner. Functionally, endoplasmic reticulum ceramidase that catalyzes the hydrolysis of ceramides into sphingosine and free fatty acids at alkaline pH. Ceramides, sphingosine, and its phosphorylated form sphingosine-1-phosphate are bioactive lipids that mediate cellular signaling pathways regulating several biological processes including cell proliferation, apoptosis and differentiation. Exhibits a strong substrate specificity towards the natural stereoisomer of ceramides with D-erythro-sphingosine as a backbone and has a higher activity towards very long-chain unsaturated fatty acids like the C24:1-ceramide. May also hydrolyze dihydroceramides to produce dihydrosphingosine. ACER1 is a skin-specific ceramidase that regulates the levels of ceramides, sphingosine and sphingosine-1-phosphate in the epidermis, mediates the calcium-induced differentiation of epidermal keratinocytes and more generally plays an important role in skin homeostasis. This Mus musculus (Mouse) protein is Alkaline ceramidase 1.